The sequence spans 278 residues: Large ribosomal subunit protein uL2 (278 aa).

The segment covering 212–221 has biased composition (basic residues); the sequence is NRWLGKRPHN. Residues 212 to 278 are disordered; the sequence is NRWLGKRPHN…ILSSRHNRKK (67 aa).

Belongs to the universal ribosomal protein uL2 family. As to quaternary structure, part of the 50S ribosomal subunit. Forms a bridge to the 30S subunit in the 70S ribosome.

Functionally, one of the primary rRNA binding proteins. Required for association of the 30S and 50S subunits to form the 70S ribosome, for tRNA binding and peptide bond formation. It has been suggested to have peptidyltransferase activity; this is somewhat controversial. Makes several contacts with the 16S rRNA in the 70S ribosome. The protein is Large ribosomal subunit protein uL2 of Methylorubrum populi (strain ATCC BAA-705 / NCIMB 13946 / BJ001) (Methylobacterium populi).